We begin with the raw amino-acid sequence, 422 residues long: Adhesin YadA (422 aa).

An N-terminal signal peptide occupies residues 1 to 25; sequence MTKDFKISVSAALISALFSSPYAFA. The interval 26–330 is surface exposed passenger domain; it reads NNDEVHFTAV…KKAIRESNQY (305 aa). Positions 206-236 form a coiled coil; that stretch reads VNVAQLKKEIEKTQVNANKKSAEVLGIANNY. The interval 331–368 is outer membrane translocation of the passenger domain; sequence TDHKFRQLDNRLDKLDTRVDKGLASSAALNSLFQPYGV. Beta stranded transmembrane passes span 369 to 379, 383 to 394, 401 to 407, and 411 to 422; these read GKVNFTAGVGG, SQALAIGSGYRV, KAGVAYA, and DVMYNASFNIEW. Residues 369 to 422 form a translocator domain region; that stretch reads GKVNFTAGVGGYRSSQALAIGSGYRVNESVALKAGVAYAGSSDVMYNASFNIEW.

The protein belongs to the autotransporter-2 (AT-2) (TC 1.B.40) family. In terms of assembly, homotrimer; trimers are very stable, not disrupted by heating at 95 degrees Celsius for 10 minutes in SDS sample buffer.

The protein resides in the cell surface. Its subcellular location is the cell outer membrane. Functionally, collagen-binding outer membrane protein forming a fibrillar matrix on the bacterial cell surface and phagocytosis resistance. Promotes initial attachment and invasion of eukaryotic cells. Also protects the bacteria by being responsible for agglutination, serum resistance and complement inactivation. Gly-389 plays an important role in this protein; replacing it with increasingly large polar residues decreases expression levels and trimer stability. Residues larger than Ser (Thr, Asn or His) significantly decrease serume resistance and bacterial autoagglution without affecting adhesion to host cells or host cell cytokine production. The chain is Adhesin YadA from Yersinia enterocolitica serotype O:8 / biotype 1B (strain NCTC 13174 / 8081).